A 610-amino-acid polypeptide reads, in one-letter code: Isocitrate dehydrogenase kinase/phosphatase (610 aa).

ATP contacts are provided by residues 359 to 365 (APGFKGT) and Lys380. Asp419 is a catalytic residue.

The protein belongs to the AceK family.

The protein resides in the cytoplasm. It catalyses the reaction L-seryl-[isocitrate dehydrogenase] + ATP = O-phospho-L-seryl-[isocitrate dehydrogenase] + ADP + H(+). Its function is as follows. Bifunctional enzyme which can phosphorylate or dephosphorylate isocitrate dehydrogenase (IDH) on a specific serine residue. This is a regulatory mechanism which enables bacteria to bypass the Krebs cycle via the glyoxylate shunt in response to the source of carbon. When bacteria are grown on glucose, IDH is fully active and unphosphorylated, but when grown on acetate or ethanol, the activity of IDH declines drastically concomitant with its phosphorylation. This is Isocitrate dehydrogenase kinase/phosphatase from Rhodopseudomonas palustris (strain TIE-1).